The primary structure comprises 210 residues: Large ribosomal subunit protein uL3 (210 aa).

The disordered stretch occupies residues 125–151 (HGFGGGPRTHGQSDRLRAPGSIGAGTD).

It belongs to the universal ribosomal protein uL3 family. In terms of assembly, part of the 50S ribosomal subunit. Forms a cluster with proteins L14 and L19.

Functionally, one of the primary rRNA binding proteins, it binds directly near the 3'-end of the 23S rRNA, where it nucleates assembly of the 50S subunit. In Roseiflexus sp. (strain RS-1), this protein is Large ribosomal subunit protein uL3.